The primary structure comprises 523 residues: Glycerate kinase (523 aa).

Ser60 carries the phosphoserine modification. Lys200 is subject to N6-acetyllysine.

It belongs to the glycerate kinase type-2 family.

The protein localises to the cytoplasm. It catalyses the reaction (R)-glycerate + ATP = (2R)-3-phosphoglycerate + ADP + H(+). This Rattus norvegicus (Rat) protein is Glycerate kinase (Glyctk).